The sequence spans 239 residues: NAD(P)H-quinone oxidoreductase subunit K, chloroplastic (239 aa).

[4Fe-4S] cluster is bound by residues Cys-43, Cys-44, Cys-108, and Cys-139. A disordered region spans residues 217–239; that stretch reads KSSVSSRELGNESGKEDVSIQNK. A compositionally biased stretch (basic and acidic residues) spans 225-239; the sequence is LGNESGKEDVSIQNK.

Belongs to the complex I 20 kDa subunit family. In terms of assembly, NDH is composed of at least 16 different subunits, 5 of which are encoded in the nucleus. The cofactor is [4Fe-4S] cluster.

It is found in the plastid. Its subcellular location is the chloroplast thylakoid membrane. It carries out the reaction a plastoquinone + NADH + (n+1) H(+)(in) = a plastoquinol + NAD(+) + n H(+)(out). It catalyses the reaction a plastoquinone + NADPH + (n+1) H(+)(in) = a plastoquinol + NADP(+) + n H(+)(out). Functionally, NDH shuttles electrons from NAD(P)H:plastoquinone, via FMN and iron-sulfur (Fe-S) centers, to quinones in the photosynthetic chain and possibly in a chloroplast respiratory chain. The immediate electron acceptor for the enzyme in this species is believed to be plastoquinone. Couples the redox reaction to proton translocation, and thus conserves the redox energy in a proton gradient. The polypeptide is NAD(P)H-quinone oxidoreductase subunit K, chloroplastic (Acorus calamus var. americanus (American sweet flag)).